The chain runs to 83 residues: Mu-theraphotoxin-Hhn2l (83 aa).

The first 21 residues, methionine 1 to alanine 21, serve as a signal peptide directing secretion. Residues serine 22–arginine 48 constitute a propeptide that is removed on maturation. 3 disulfide bridges follow: cysteine 50-cysteine 65, cysteine 57-cysteine 70, and cysteine 64-cysteine 77. A Leucine amide modification is found at leucine 81.

Belongs to the neurotoxin 10 (Hwtx-1) family. 15 (Hntx-3) subfamily. As to quaternary structure, monomer. In terms of tissue distribution, expressed by the venom gland.

Its subcellular location is the secreted. Lethal neurotoxin. Selectively blocks tetrodotoxin-sensitive voltage-gated sodium channels (Nav). Does not affect tetrodotoxin-resistant voltage-gated sodium channels or calcium channels. The chain is Mu-theraphotoxin-Hhn2l from Cyriopagopus hainanus (Chinese bird spider).